The primary structure comprises 315 residues: Olfactory receptor 10H2 (315 aa).

At 1-25 (MLGLNHTSMSEFILVGFSAFPHLQL) the chain is on the extracellular side. The N-linked (GlcNAc...) asparagine glycan is linked to Asn-5. The chain crosses the membrane as a helical span at residues 26 to 46 (MLFLLFLLMYLFTLLGNLLIM). Residues 47-54 (ATVWSERS) lie on the Cytoplasmic side of the membrane. The chain crosses the membrane as a helical span at residues 55–75 (LHTPMYLFLCVLSVSEILYTV). Topologically, residues 76–99 (AIIPRMLADLLSTQRSIAFLACAS) are extracellular. A disulfide bridge links Cys-97 with Cys-189. A helical transmembrane segment spans residues 100–120 (QMFFSFSFGFTHSFLLTVMGY). The Cytoplasmic portion of the chain corresponds to 121–139 (DRYVAICHPLRYNVLMSPR). The chain crosses the membrane as a helical span at residues 140–160 (GCACLVGCSWAGGSVMGMVVT). Residues 161–197 (SAIFQLTFCGSHEIQHFLCHVPPLLKLACGNNVPAVA) are Extracellular-facing. The chain crosses the membrane as a helical span at residues 198-218 (LGVGLVCIMALLGCFLLILLS). The Cytoplasmic portion of the chain corresponds to 219–238 (YAFIVADILKIPSAEGRNKA). A helical membrane pass occupies residues 239-259 (FSTCASHLIVVIVHYGFASVI). The Extracellular portion of the chain corresponds to 260-272 (YLKPKGPHSQEGD). A helical transmembrane segment spans residues 273 to 293 (TLMATTYAVLTPFLSPIIFSL). Over 294-315 (RNKELKVAMKRTFLSTLYSSGT) the chain is Cytoplasmic.

The protein belongs to the G-protein coupled receptor 1 family.

It localises to the cell membrane. Its function is as follows. Odorant receptor. In Homo sapiens (Human), this protein is Olfactory receptor 10H2 (OR10H2).